The primary structure comprises 616 residues: Electron transfer flavoprotein-ubiquinone oxidoreductase, mitochondrial (616 aa).

The transit peptide at methionine 1 to cysteine 32 directs the protein to the mitochondrion. Residue valine 70–isoleucine 84 coordinates FAD. The residue at position 95 (lysine 95) is an N6-acetyllysine. An intramembrane segment occupies isoleucine 108 to aspartate 129. 2 positions are modified to N6-acetyllysine: lysine 131 and lysine 222. Residues glycine 304 and glycine 305 each contribute to the a ubiquinone site. N6-acetyllysine occurs at positions 356 and 415. Residues threonine 427–glutamate 446 lie within the membrane without spanning it. Phosphoserine is present on serine 550. 4 residues coordinate [4Fe-4S] cluster: cysteine 560, cysteine 585, cysteine 588, and cysteine 591. Residues phenylalanine 576–proline 605 form the 4Fe-4S ferredoxin-type domain.

Belongs to the ETF-QO/FixC family. In terms of assembly, monomer. The cofactor is [4Fe-4S] cluster. FAD serves as cofactor. In terms of processing, acetylation of Lys-95 and Lys-222 is observed in liver mitochondria from fasted mice but not from fed mice.

It localises to the mitochondrion inner membrane. The catalysed reaction is a ubiquinone + reduced [electron-transfer flavoprotein] = a ubiquinol + oxidized [electron-transfer flavoprotein] + H(+). Functionally, accepts electrons from ETF and reduces ubiquinone. The protein is Electron transfer flavoprotein-ubiquinone oxidoreductase, mitochondrial (Etfdh) of Mus musculus (Mouse).